The sequence spans 289 residues: BTB/POZ domain-containing protein KCTD7 (289 aa).

A compositionally biased stretch (polar residues) spans 1-10 (MVVVTGQSKG). Positions 1-35 (MVVVTGQSKGSGDPDEAMSSSDAEDDFQEPATPTA) are disordered. In terms of domain architecture, BTB spans 51-149 (EVVPLNVGGM…HLEDVQPLKG (99 aa)).

The protein localises to the cell membrane. It localises to the cytoplasm. It is found in the cytosol. In terms of biological role, may be involved in the control of excitability of cortical neurons. In Gallus gallus (Chicken), this protein is BTB/POZ domain-containing protein KCTD7 (KCTD7).